Here is a 2291-residue protein sequence, read N- to C-terminus: Protein Ycf2 (2291 aa).

Residue glycine 1645 to serine 1652 coordinates ATP.

The protein belongs to the Ycf2 family.

It is found in the plastid. The protein localises to the chloroplast stroma. Its function is as follows. Probable ATPase of unknown function. Its presence in a non-photosynthetic plant (Epifagus virginiana) and experiments in tobacco indicate that it has an essential function which is probably not related to photosynthesis. The polypeptide is Protein Ycf2 (Olimarabidopsis pumila (Dwarf rocket)).